The chain runs to 151 residues: Small ribosomal subunit protein uS19 (151 aa).

This sequence belongs to the universal ribosomal protein uS19 family.

Its function is as follows. Protein S19 forms a complex with S13 that binds strongly to the 16S ribosomal RNA. The polypeptide is Small ribosomal subunit protein uS19 (Picrophilus torridus (strain ATCC 700027 / DSM 9790 / JCM 10055 / NBRC 100828 / KAW 2/3)).